A 256-amino-acid chain; its full sequence is Non-homologous end joining protein Ku 2 (256 aa).

One can recognise a Ku domain in the interval 13 to 184; the sequence is FADTDVAVKL…SLELQESPVS (172 aa).

It belongs to the prokaryotic Ku family. In terms of assembly, homodimer. Interacts with LigD.

With LigD forms a non-homologous end joining (NHEJ) DNA repair enzyme, which repairs dsDNA breaks with reduced fidelity. Binds linear dsDNA with 5'- and 3'- overhangs but not closed circular dsDNA nor ssDNA. Recruits and stimulates the ligase activity of LigD. The chain is Non-homologous end joining protein Ku 2 from Geotalea uraniireducens (strain Rf4) (Geobacter uraniireducens).